The chain runs to 388 residues: MNLHEYQAKQLFARYGLPAPTGYACTTPREAEEAASKIGAGPWVVKCQVHAGGRGKAGGVKVVSNKEDIRAFAENWLGKKLVTYQTDAQGQPVHQILVEAATDIDKELYLGAVVDRGTRRVVFMASTEGGVEIEKVAEETPELIHKAAIDPLVGPQPYQGRELAFKLGLSGKQVAQFTKIFMGLATLFLERDLALVEINPLVITKQGDLVCLDGKLGADGNALFRQPELREMRDPSQEDSREAHAAQWELNYVALDGNIGCMVNGAGLAMGTMDIVKLHGGSPANFLDVGGGATKERVTEAFKIILSDDKVKAVFVNIFGGIVRCDLIADGIIGAVAEVGVNVPVVVRLEGNNAELGAKKLADSGLNIIAATSLTGAAQQVVAAVEGK.

Residues 9–244 (KQLFARYGLP…PSQEDSREAH (236 aa)) form the ATP-grasp domain. Residues Lys46, 53–55 (GRG), Glu99, Thr102, and Glu107 each bind ATP. 2 residues coordinate Mg(2+): Asn199 and Asp213. Substrate contacts are provided by residues Asn264 and 321 to 323 (GIV).

This sequence belongs to the succinate/malate CoA ligase beta subunit family. As to quaternary structure, heterotetramer of two alpha and two beta subunits. Mg(2+) serves as cofactor.

The enzyme catalyses succinate + ATP + CoA = succinyl-CoA + ADP + phosphate. The catalysed reaction is GTP + succinate + CoA = succinyl-CoA + GDP + phosphate. It functions in the pathway carbohydrate metabolism; tricarboxylic acid cycle; succinate from succinyl-CoA (ligase route): step 1/1. Its function is as follows. Succinyl-CoA synthetase functions in the citric acid cycle (TCA), coupling the hydrolysis of succinyl-CoA to the synthesis of either ATP or GTP and thus represents the only step of substrate-level phosphorylation in the TCA. The beta subunit provides nucleotide specificity of the enzyme and binds the substrate succinate, while the binding sites for coenzyme A and phosphate are found in the alpha subunit. This Pectobacterium carotovorum subsp. carotovorum (strain PC1) protein is Succinate--CoA ligase [ADP-forming] subunit beta.